The chain runs to 824 residues: Intraflagellar transport protein 88 homolog (824 aa).

Disordered stretches follow at residues 1–27 (MENV…PAYD) and 111–134 (AFDP…DSPE). TPR repeat units follow at residues 196 to 229 (YSVL…KMFS), 232 to 265 (GRLK…IPSV), 271 to 304 (IKIM…APSL), 415 to 448 (NDLE…DSRV), 450 to 483 (SAAA…DRYN), 484 to 517 (PSAL…DSSC), 518 to 551 (TEAL…LRNS), 552 to 585 (AQVL…VPTD), 586 to 619 (SQAL…FPSN), 620 to 653 (IEVI…QPTQ), and 654 to 687 (VKWQ…FPEN). Over residues 721-731 (EMREQRIKSGR) the composition is skewed to basic and acidic residues. The disordered stretch occupies residues 721 to 824 (EMREQRIKSG…EELGDDLLPE (104 aa)). Polar residues predominate over residues 748–757 (DSGQNNSASS). The span at 797–808 (ERPKTAAKKRID) shows a compositional bias: basic and acidic residues. Over residues 809–824 (EDDFADEELGDDLLPE) the composition is skewed to acidic residues.

As to quaternary structure, component of the IFT complex B, at least composed of IFT20, IFT22, IFT25, IFT27, IFT46, IFT52, TRAF3IP1/IFT54, IFT57, IFT74, IFT80, IFT81, and IFT88. Interacts with IFT20, IFT22, IFT25, IFT27, IFT52, TRAF3IP1, IFT74, IFT80 and IFT81. Interacts with IFT172. Interacts with IFT57. Interacts with IFT46. Interacts with IFT70B. Interacts with C2CD3. Interacts with ENTR1 (via N-terminus). Interacts with LRRC56. Interacts with DZIP1. Interacts with CCDC38. Interacts with CCDC146. Interacts with CFAP53. As to expression, testis.

The protein resides in the cytoplasm. Its subcellular location is the cytoskeleton. It is found in the microtubule organizing center. The protein localises to the centrosome. It localises to the centriole. The protein resides in the cilium basal body. Its subcellular location is the cell projection. It is found in the cilium. The protein localises to the flagellum. In terms of biological role, positively regulates primary cilium biogenesis. Also involved in autophagy since it is required for trafficking of ATG16L and the expansion of the autophagic compartment. The polypeptide is Intraflagellar transport protein 88 homolog (Ift88) (Mus musculus (Mouse)).